A 385-amino-acid polypeptide reads, in one-letter code: Glucans biosynthesis protein C (385 aa).

10 helical membrane passes run 17–37 (AWLM…SHTW), 60–80 (MQVF…RYPL), 91–111 (VGIP…IMLQ), 137–157 (ISHL…VWIF), 173–193 (KFSM…YAVI), 212–232 (FIVM…LAFI), 239–259 (LFTT…VAYL), 274–294 (TESV…FSFG), 311–331 (ASLF…AYIT), and 338–358 (WLGF…LYEI).

The protein belongs to the acyltransferase 3 family. OpgC subfamily.

It localises to the cell membrane. The protein operates within glycan metabolism; osmoregulated periplasmic glucan (OPG) biosynthesis. Its function is as follows. Necessary for the succinyl substitution of periplasmic glucans. Could catalyze the transfer of succinyl residues from the cytoplasmic side of the membrane to the nascent glucan backbones on the periplasmic side of the membrane. The polypeptide is Glucans biosynthesis protein C (Shigella sonnei (strain Ss046)).